Reading from the N-terminus, the 47-residue chain is Rhodotorucin-A peptides type 3 (47 aa).

A propeptide spanning residues 1-3 (MVA) is cleaved from the precursor. Residue Cys-14 is the site of S-farnesyl cysteine attachment. Positions 15 to 18 (TVAK) are excised as a propeptide. Cys-29 carries the S-farnesyl cysteine lipid modification. Positions 30 to 33 (TVSK) are excised as a propeptide. Residue Cys-44 is the site of S-farnesyl cysteine attachment. The propeptide occupies 45–47 (TVA).

It localises to the cell membrane. In terms of biological role, rhodotorucin-A is a mating pheromone in cells of mating type A of Rhodosporidium toruloides. The polypeptide is Rhodotorucin-A peptides type 3 (RHA3) (Rhodotorula toruloides (Yeast)).